Here is a 123-residue protein sequence, read N- to C-terminus: Large ribosomal subunit protein uL14 (123 aa).

The protein belongs to the universal ribosomal protein uL14 family. As to quaternary structure, part of the 50S ribosomal subunit. Forms a cluster with proteins L3 and L19. In the 70S ribosome, L14 and L19 interact and together make contacts with the 16S rRNA in bridges B5 and B8.

In terms of biological role, binds to 23S rRNA. Forms part of two intersubunit bridges in the 70S ribosome. The chain is Large ribosomal subunit protein uL14 from Aliivibrio fischeri (strain ATCC 700601 / ES114) (Vibrio fischeri).